Here is a 434-residue protein sequence, read N- to C-terminus: Tryptamine hydroxycinnamoyltransferase 2 (434 aa).

Catalysis depends on proton acceptor residues histidine 154 and aspartate 380.

Belongs to the plant acyltransferase family.

Its function is as follows. Hydroxycinnamoyl transferase that catalyzes the transfer of an acyl from p-coumaryol-CoA to tryptamine, to produce coumaroyl tryptamine. Serotonin and tyramine serve as acyl acceptors in vitro. Can use caffeoyl-CoA, and to a lesser extent feruloyl-CoA, as acyl donors. In Oryza sativa subsp. japonica (Rice), this protein is Tryptamine hydroxycinnamoyltransferase 2.